The primary structure comprises 403 residues: Esterase LipC (403 aa).

Residues Ser-237, Asp-334, and His-367 contribute to the active site.

The protein belongs to the 'GDXG' lipolytic enzyme family.

The protein resides in the cell surface. The protein localises to the secreted. Its subcellular location is the cell wall. It localises to the capsule. It carries out the reaction a fatty acid ester + H2O = an aliphatic alcohol + a fatty acid + H(+). The catalysed reaction is a butanoate ester + H2O = an aliphatic alcohol + butanoate + H(+). It catalyses the reaction a hexanoate ester + H2O = an aliphatic alcohol + hexanoate + H(+). The enzyme catalyses an acetyl ester + H2O = an aliphatic alcohol + acetate + H(+). It carries out the reaction an octanoate ester + H2O = an aliphatic alcohol + octanoate + H(+). The catalysed reaction is decanoate ester + H2O = decanoate + an aliphatic alcohol + H(+). Its function is as follows. Esterase that can hydrolyze short-chain esters with the carbon chain containing 2 to 10 carbon atoms. Does not have lipase activity. Is highly immunogenic and elicits strong humoral immune responses in both HIV-negative (HIV-) and HIV-positive (HIV+) tuberculosis (TB) patients. Also elicits pro-inflammatory cytokine and chemokine responses from macrophages and pulmonary epithelial cells. May participate in the progression of active tuberculosis both by contributing to the utilization of lipid substrates for bacterial growth and replication, and by modulating immune responses. This is Esterase LipC from Mycobacterium tuberculosis (strain ATCC 25618 / H37Rv).